The primary structure comprises 497 residues: Cytochrome P450 76AD1 (497 aa).

A helical transmembrane segment spans residues 4–24; sequence ATLAMILAIWFISFHFIKLLF. Cys439 contributes to the heme binding site.

Belongs to the cytochrome P450 family. Heme serves as cofactor.

It localises to the membrane. The protein operates within pigment biosynthesis; betalain biosynthesis. In terms of biological role, converts L-DOPA to cyclo-DOPA in the betalain pathway. Provides the cyclo-DOPA moiety of all red betacyanins. This chain is Cytochrome P450 76AD1, found in Beta vulgaris (Sugar beet).